Reading from the N-terminus, the 314-residue chain is MIFDHNDKRPPIVVLCGPTAAGKTALAVRLAGELPVEVVSADSRQVYRHMDIGTAKPTSEELAAVPHHLIDVVDPDENFTAGNFCRLGRQALNDILGRNRLPIVVGGTGLYIQALLHGLIDVPDGDSELRATLLRAEQLHGEGTLYQRLQIVDPVLAKRLPPNDLVRIVRGLEVYELCNRRLSDLQAEHAGQKSPYRVLTLGLTMSREALYERINHRVWRMLEDGLAQEVEFLLKRGYAAECKAMQTIGYRELVQHVLGNLSMDEAVRLIQRDTRRYAKRQLTWFNKVNSIIWLDSFGEFAKVLKLIDSFIYAA.

Residue Gly17–Thr24 coordinates ATP. Thr19–Thr24 lines the substrate pocket. The tract at residues Asp42–Gln45 is interaction with substrate tRNA.

Belongs to the IPP transferase family. In terms of assembly, monomer. Mg(2+) serves as cofactor.

It catalyses the reaction adenosine(37) in tRNA + dimethylallyl diphosphate = N(6)-dimethylallyladenosine(37) in tRNA + diphosphate. Functionally, catalyzes the transfer of a dimethylallyl group onto the adenine at position 37 in tRNAs that read codons beginning with uridine, leading to the formation of N6-(dimethylallyl)adenosine (i(6)A). The sequence is that of tRNA dimethylallyltransferase 1 from Syntrophotalea carbinolica (strain DSM 2380 / NBRC 103641 / GraBd1) (Pelobacter carbinolicus).